The chain runs to 133 residues: Ribosome-binding factor A (133 aa).

It belongs to the RbfA family. In terms of assembly, monomer. Binds 30S ribosomal subunits, but not 50S ribosomal subunits or 70S ribosomes.

The protein localises to the cytoplasm. Its function is as follows. One of several proteins that assist in the late maturation steps of the functional core of the 30S ribosomal subunit. Associates with free 30S ribosomal subunits (but not with 30S subunits that are part of 70S ribosomes or polysomes). Required for efficient processing of 16S rRNA. May interact with the 5'-terminal helix region of 16S rRNA. The sequence is that of Ribosome-binding factor A from Acinetobacter baumannii (strain AB307-0294).